The primary structure comprises 239 residues: Small ribosomal subunit protein uS3 (239 aa).

A KH type-2 domain is found at 39-107 (VREFLRKKLA…ATSINIEEIR (69 aa)). Residues 215–239 (TSNTNELSDEKRNRRKPRNANRRKE) are disordered. Residues 227 to 239 (NRRKPRNANRRKE) are compositionally biased toward basic residues.

The protein belongs to the universal ribosomal protein uS3 family. Part of the 30S ribosomal subunit. Forms a tight complex with proteins S10 and S14.

In terms of biological role, binds the lower part of the 30S subunit head. Binds mRNA in the 70S ribosome, positioning it for translation. This chain is Small ribosomal subunit protein uS3, found in Dichelobacter nodosus (strain VCS1703A).